A 236-amino-acid polypeptide reads, in one-letter code: Small ribosomal subunit protein uS2 (236 aa).

The protein belongs to the universal ribosomal protein uS2 family.

The chain is Small ribosomal subunit protein uS2 from Brevibacillus brevis (strain 47 / JCM 6285 / NBRC 100599).